The chain runs to 454 residues: tRNA modification GTPase MnmE (454 aa).

Positions 23, 80, and 120 each coordinate (6S)-5-formyl-5,6,7,8-tetrahydrofolate. Positions 216 to 377 constitute a TrmE-type G domain; that stretch reads GMKVVIAGRP…LRNHLKQSMG (162 aa). Residue N226 coordinates K(+). GTP contacts are provided by residues 226–231, 245–251, 270–273, 335–338, and 358–360; these read NAGKSS, TDIAGTT, DTAG, NKAD, and SAR. Residue S230 coordinates Mg(2+). K(+) contacts are provided by T245, I247, and T250. Residue T251 coordinates Mg(2+). Residue K454 coordinates (6S)-5-formyl-5,6,7,8-tetrahydrofolate.

Belongs to the TRAFAC class TrmE-Era-EngA-EngB-Septin-like GTPase superfamily. TrmE GTPase family. Homodimer. Heterotetramer of two MnmE and two MnmG subunits. The cofactor is K(+).

The protein localises to the cytoplasm. In terms of biological role, exhibits a very high intrinsic GTPase hydrolysis rate. Involved in the addition of a carboxymethylaminomethyl (cmnm) group at the wobble position (U34) of certain tRNAs, forming tRNA-cmnm(5)s(2)U34. The sequence is that of tRNA modification GTPase MnmE from Escherichia coli O6:K15:H31 (strain 536 / UPEC).